Here is a 273-residue protein sequence, read N- to C-terminus: Putative phosphoenolpyruvate synthase regulatory protein (273 aa).

153–160 is an ADP binding site; it reads GVSRSGKT.

This sequence belongs to the pyruvate, phosphate/water dikinase regulatory protein family. PSRP subfamily.

The enzyme catalyses [pyruvate, water dikinase] + ADP = [pyruvate, water dikinase]-phosphate + AMP + H(+). It carries out the reaction [pyruvate, water dikinase]-phosphate + phosphate + H(+) = [pyruvate, water dikinase] + diphosphate. Its function is as follows. Bifunctional serine/threonine kinase and phosphorylase involved in the regulation of the phosphoenolpyruvate synthase (PEPS) by catalyzing its phosphorylation/dephosphorylation. This Variovorax paradoxus (strain S110) protein is Putative phosphoenolpyruvate synthase regulatory protein.